A 702-amino-acid chain; its full sequence is Methionine--tRNA ligase (702 aa).

The 'HIGH' region motif lies at 23–33 (PYANGPLHLGH). C154, C157, C167, and C170 together coordinate Zn(2+). Positions 341 to 345 (KMSKS) match the 'KMSKS' region motif. Residue K344 coordinates ATP. Positions 562–593 (LAPPPASAKQQNASMSNTAPPPTAEEPETTAP) are disordered. A compositionally biased stretch (polar residues) spans 569-578 (AKQQNASMSN). The tRNA-binding domain occupies 599 to 702 (DFAKLDLRIG…SSAQPGMPVR (104 aa)).

Belongs to the class-I aminoacyl-tRNA synthetase family. MetG type 1 subfamily. As to quaternary structure, homodimer. Requires Zn(2+) as cofactor.

It is found in the cytoplasm. It carries out the reaction tRNA(Met) + L-methionine + ATP = L-methionyl-tRNA(Met) + AMP + diphosphate. Functionally, is required not only for elongation of protein synthesis but also for the initiation of all mRNA translation through initiator tRNA(fMet) aminoacylation. This chain is Methionine--tRNA ligase, found in Xylella fastidiosa (strain M23).